The sequence spans 90 residues: Small ribosomal subunit protein bS18 (90 aa).

The protein belongs to the bacterial ribosomal protein bS18 family. In terms of assembly, part of the 30S ribosomal subunit. Forms a tight heterodimer with protein bS6.

Binds as a heterodimer with protein bS6 to the central domain of the 16S rRNA, where it helps stabilize the platform of the 30S subunit. The chain is Small ribosomal subunit protein bS18 from Bordetella petrii (strain ATCC BAA-461 / DSM 12804 / CCUG 43448).